The following is a 677-amino-acid chain: Zinc finger protein 526 (677 aa).

C2H2-type zinc fingers lie at residues 57-79 (FMCS…QEQH), 109-131 (FQCG…QDAH), and 141-164 (YQCG…KAQH). The disordered stretch occupies residues 167–190 (TAAAKPPVPPPLPPVTPPPPPPAP). Residues 172 to 190 (PPVPPPLPPVTPPPPPPAP) show a composition bias toward pro residues. The segment at 198-220 (YECPECSTLCTTPEEFLEHQGTH) adopts a C2H2-type 4 zinc-finger fold. Residues 223–232 (SLEKEEHNGL) are compositionally biased toward basic and acidic residues. Residues 223–300 (SLEKEEHNGL…RRASHGPASA (78 aa)) are disordered. Acidic residues predominate over residues 233–257 (EEEEEDDEDDNEETEEEEEAAAEVG). 4 consecutive C2H2-type zinc fingers follow at residues 304 to 326 (FYCS…GRAH), 331 to 353 (HECT…LRLH), 359 to 381 (YLCV…RRAH), and 387 to 408 (HRCR…RRTH). Residues 408–449 (HAGKSGAPPSAAPPTVASAVASLAPAEPTPPPPAPPTPPAQL) form a disordered region. The segment covering 410–433 (GKSGAPPSAAPPTVASAVASLAPA) has biased composition (low complexity). Pro residues predominate over residues 434–449 (EPTPPPPAPPTPPAQL). C2H2-type zinc fingers lie at residues 449–472 (LPCP…RAVH), 479–501 (HRCG…LRTH), 507–529 (FQCH…QLTH), 535–557 (YQCL…RRLH), and 580–602 (YYCG…QRVH). The interval 608–627 (LTLQPPRSPPPAPPPPPEPQ) is disordered. A compositionally biased stretch (pro residues) spans 613-626 (PRSPPPAPPPPPEP).

This sequence belongs to the krueppel C2H2-type zinc-finger protein family.

It is found in the nucleus. Functionally, may be involved in transcriptional regulation. In Bos taurus (Bovine), this protein is Zinc finger protein 526 (ZNF526).